Reading from the N-terminus, the 596-residue chain is Pentatricopeptide repeat-containing protein At1g80270, mitochondrial (596 aa).

The N-terminal 69 residues, 1–69 (MFALSKVLRR…RALSSSAGTK (69 aa)), are a transit peptide targeting the mitochondrion. The segment at 62–119 (LSSSAGTKSDQEEDDLEDGFSELEGSKSGQGSTSSDEDEGKLSADEEEEEELDLIETD) is disordered. 2 stretches are compositionally biased toward acidic residues: residues 72-82 (QEEDDLEDGFS) and 96-117 (SDEDEGKLSADEEEEEELDLIE). PPR repeat units lie at residues 228 to 262 (GEVLYRTLLANCVAAGNVKKSELVFNKMKDLGFPL), 263 to 296 (SGFTCDQMLLLHKRIDRKKIADVLLLMEKENIKP), 297 to 331 (SLLTYKILIDVKGATNDISGMEQILETMKDEGVEL), 332 to 366 (DFQTQALTARHYSGAGLKDKAEKVLKEMEGESLEA), 367 to 397 (NRRAFKDLLSIYASLGREDEVKRIWKICESK), 399 to 433 (YFEESLAAIQAFGKLNKVQEAEAIFEKIVKMDRRA), 434 to 468 (SSSTYSVLLRVYVDHKMLSKGKDLVKRMAESGCRI), 469 to 503 (EATTWDALIKLYVEAGEVEKADSLLDKASKQSHTK), and 505 to 539 (MMNSFMYIMDEYSKRGDVHNTEKIFLKMREAGYTS).

This sequence belongs to the PPR family. P subfamily.

The protein resides in the mitochondrion. This Arabidopsis thaliana (Mouse-ear cress) protein is Pentatricopeptide repeat-containing protein At1g80270, mitochondrial.